A 783-amino-acid chain; its full sequence is Tripartite motif-containing protein 67 (783 aa).

An RING-type; degenerate zinc finger spans residues 7–42 (CPVCGSLFREPIILPCSHNVCLPCARTIAVQTPDGE). The B box-type 1; degenerate zinc-finger motif lies at 206–253 (AICQLCDRTPPEPAATLCEQCDVLYCSACQLKCHPSRGPFAKHRLVQP). Positions 247 to 295 (KHRLVQPPPPPPPPAEAASGPTGTAQGAPSGGGGCKSPGGAGAGATGGS) are disordered. Residues 252-261 (QPPPPPPPPA) show a composition bias toward pro residues. Residues 275–293 (PSGGGGCKSPGGAGAGATG) are compositionally biased toward gly residues. Residues 298–340 (RKFPTCPEHEMENYSMYCVSCRTPVCYLCLEEGRHAKHEVKPL) form a B box-type 2 zinc finger. Zn(2+)-binding residues include C303, H306, C326, and H332. Residues 345–382 (KQHKAQLSQALNGVSDKAKEAKEFLVQLKNILQQIQEN) are a coiled coil. In terms of domain architecture, COS spans 448 to 506 (IKENDPSGFLQISDALIKRVQVSQEQWVKGALEPKVSAEFDLTLDSEPLLQAIHQLDFI). A Fibronectin type-III domain is found at 513–607 (PPVPLLQLEK…KTVVLQTSDV (95 aa)). The region spanning 589–780 (NSSGVGPYSK…VPTNLGRPKL (192 aa)) is the B30.2/SPRY domain.

Belongs to the TRIM/RBCC family.

It is found in the cytoplasm. Its subcellular location is the cytoskeleton. The chain is Tripartite motif-containing protein 67 (TRIM67) from Homo sapiens (Human).